The chain runs to 343 residues: Retroviral-like aspartic protease 1 (343 aa).

Residues 1 to 55 (MGSPGASLGIKKALQSEQATALPASAPAVSQPTAPAPSCLPKAGQVIPTLLREAP) lie on the Cytoplasmic side of the membrane. Positions 1–190 (MGSPGASLGI…HLPKEIVFAN (190 aa)) are excised as a propeptide. The helical transmembrane segment at 56–76 (FSSVIAPTLLCGFLFLAWVAA) threads the bilayer. Topologically, residues 77 to 343 (EVPEESSRMA…SEEGRQELSH (267 aa)) are extracellular. Positions 207–288 (VRFLVDSGAQ…AEEAIIGTDV (82 aa)) constitute a Peptidase A2 domain. Residue D212 is part of the active site. An N-linked (GlcNAc...) asparagine glycan is attached at N276. The propeptide occupies 327 to 343 (LIEEDPSSEEGRQELSH).

As to quaternary structure, homodimer. Post-translationally, undergoes autocleavage which is necessary for activation of the protein. In terms of tissue distribution, expressed primarily in the granular layer of the epidermis and inner root sheath of hair follicles. In psoriatic skin, expressed throughout the stratum corneum. In ulcerated skin, expressed in the stratum granulosum of intact epidermis but almost absent from ulcerated regions. Expressed in differentiated areas of squamous cell carcinomas but not in undifferentiated tumors.

Its subcellular location is the membrane. Its function is as follows. Protease responsible for filaggrin processing, essential for the maintenance of a proper epidermis organization. The chain is Retroviral-like aspartic protease 1 from Homo sapiens (Human).